A 319-amino-acid polypeptide reads, in one-letter code: Replication factor C small subunit (319 aa).

45–52 provides a ligand contact to ATP; the sequence is GPPGTGKT.

It belongs to the activator 1 small subunits family. RfcS subfamily. Heteropentamer composed of four small subunits (RfcS) and one large subunit (RfcL). Both subunits interact with PCNA.

Functionally, part of the RFC clamp loader complex which loads the PCNA sliding clamp onto DNA. The complex possesses DNA-dependent ATPase activity which is further stimulated by PCNA. This Archaeoglobus fulgidus (strain ATCC 49558 / DSM 4304 / JCM 9628 / NBRC 100126 / VC-16) protein is Replication factor C small subunit (rfcS).